Here is an 88-residue protein sequence, read N- to C-terminus: Exodeoxyribonuclease 7 small subunit (88 aa).

Residues 69–88 (DPMHPDDGEPFDPSLVSTSQ) are disordered.

Belongs to the XseB family. As to quaternary structure, heterooligomer composed of large and small subunits.

It localises to the cytoplasm. The enzyme catalyses Exonucleolytic cleavage in either 5'- to 3'- or 3'- to 5'-direction to yield nucleoside 5'-phosphates.. Its function is as follows. Bidirectionally degrades single-stranded DNA into large acid-insoluble oligonucleotides, which are then degraded further into small acid-soluble oligonucleotides. In Xylella fastidiosa (strain M23), this protein is Exodeoxyribonuclease 7 small subunit.